A 345-amino-acid polypeptide reads, in one-letter code: Tropomodulin-4 (345 aa).

A disordered region spans residues 42 to 63; the sequence is NMLLPAGLRQRDQTKKSPTGPL.

Belongs to the tropomodulin family. Binds to the N-terminus of tropomyosin and to actin.

The protein resides in the cytoplasm. The protein localises to the cytoskeleton. Its function is as follows. Blocks the elongation and depolymerization of the actin filaments at the pointed end. The Tmod/TM complex contributes to the formation of the short actin protofilament, which in turn defines the geometry of the membrane skeleton. The chain is Tropomodulin-4 (TMOD4) from Bos taurus (Bovine).